We begin with the raw amino-acid sequence, 533 residues long: Chromosomal replication initiator protein DnaA (533 aa).

A domain I, interacts with DnaA modulators region spans residues 1–72 (MNDFWQHCSA…DLARDFWNAP (72 aa)). Positions 72–196 (PIEVQFVLDP…EAADSMYERS (125 aa)) are domain II. Residues 83 to 110 (AGQRSPAGATPLAPRAPLPSANPAPVGP) are disordered. Over residues 96–110 (PRAPLPSANPAPVGP) the composition is skewed to pro residues. The segment at 197–413 (KLNPVLTFDN…GALRKILAYS (217 aa)) is domain III, AAA+ region. Residues glycine 241, glycine 243, lysine 244, and threonine 245 each contribute to the ATP site. Positions 414-533 (KFHGREITIE…LHVLEQTLKG (120 aa)) are domain IV, binds dsDNA.

It belongs to the DnaA family. As to quaternary structure, oligomerizes as a right-handed, spiral filament on DNA at oriC.

It is found in the cytoplasm. Functionally, plays an essential role in the initiation and regulation of chromosomal replication. ATP-DnaA binds to the origin of replication (oriC) to initiate formation of the DNA replication initiation complex once per cell cycle. Binds the DnaA box (a 9 base pair repeat at the origin) and separates the double-stranded (ds)DNA. Forms a right-handed helical filament on oriC DNA; dsDNA binds to the exterior of the filament while single-stranded (ss)DNA is stabiized in the filament's interior. The ATP-DnaA-oriC complex binds and stabilizes one strand of the AT-rich DNA unwinding element (DUE), permitting loading of DNA polymerase. After initiation quickly degrades to an ADP-DnaA complex that is not apt for DNA replication. Binds acidic phospholipids. This Burkholderia mallei (strain NCTC 10247) protein is Chromosomal replication initiator protein DnaA.